Here is a 329-residue protein sequence, read N- to C-terminus: MARMYYEKDVDLEVLKNKKVAVLGYGSQGHAHAQNLRDNGVHVMIGLYDGSKSAQKAKEDGFEVKSVAEATKESDLTMMLMPDEKQKKVYEESVKDNLKEGQTLAFAHGFNIHYNQVQPPEFVDVVMVAPKGPGHLVRNVFTKGSGVPALFAVYQDHTKKATETVLAYAKGIGATRAGVLETTFKEETETDLFGEQSVLCGGISELIKLGYKTLVDAGYQKEVAYFECLHEMKLIVDLIYEGGFERMRYSISDTAEYGDYVSGKRVITDAAKQGMQNVLEDIQNGKFAKAWIKENEEGRENFLKTREEEYNTEIAEVGRNLRSMMSFLK.

The region spanning 2-182 (ARMYYEKDVD…GATRAGVLET (181 aa)) is the KARI N-terminal Rossmann domain. NADP(+) contacts are provided by residues 25–28 (YGSQ), Ser-51, Ser-53, and 83–86 (DEKQ). The active site involves His-108. Gly-134 is a binding site for NADP(+). The 146-residue stretch at 183–328 (TFKEETETDL…RNLRSMMSFL (146 aa)) folds into the KARI C-terminal knotted domain. Mg(2+) contacts are provided by Asp-191, Glu-195, Glu-227, and Glu-231. Ser-252 is a binding site for substrate.

It belongs to the ketol-acid reductoisomerase family. Mg(2+) is required as a cofactor.

The catalysed reaction is (2R)-2,3-dihydroxy-3-methylbutanoate + NADP(+) = (2S)-2-acetolactate + NADPH + H(+). It carries out the reaction (2R,3R)-2,3-dihydroxy-3-methylpentanoate + NADP(+) = (S)-2-ethyl-2-hydroxy-3-oxobutanoate + NADPH + H(+). Its pathway is amino-acid biosynthesis; L-isoleucine biosynthesis; L-isoleucine from 2-oxobutanoate: step 2/4. It functions in the pathway amino-acid biosynthesis; L-valine biosynthesis; L-valine from pyruvate: step 2/4. Involved in the biosynthesis of branched-chain amino acids (BCAA). Catalyzes an alkyl-migration followed by a ketol-acid reduction of (S)-2-acetolactate (S2AL) to yield (R)-2,3-dihydroxy-isovalerate. In the isomerase reaction, S2AL is rearranged via a Mg-dependent methyl migration to produce 3-hydroxy-3-methyl-2-ketobutyrate (HMKB). In the reductase reaction, this 2-ketoacid undergoes a metal-dependent reduction by NADPH to yield (R)-2,3-dihydroxy-isovalerate. In Clostridioides difficile (strain 630) (Peptoclostridium difficile), this protein is Ketol-acid reductoisomerase (NADP(+)).